We begin with the raw amino-acid sequence, 647 residues long: 5-aminolevulinate synthase, non-specific, mitochondrial (647 aa).

A mitochondrion-targeting transit peptide spans 1 to 56; sequence METVVRRCPFLSRVPQAFLQKAGKSLLFYAQNCPKMMEIGAKPAPRALSTSAVLCQ. Residues 61–112 form a disordered region; that stretch reads TPPANEKDKAAKAEVQQAPDGSQQAPDGSQQTADGTQLPSGHPSLASSQGTG. Residues 79-112 are compositionally biased toward polar residues; that stretch reads PDGSQQAPDGSQQTADGTQLPSGHPSLASSQGTG. Substrate-binding residues include Arg224, Ser341, and Lys360. 3 residues coordinate pyridoxal 5'-phosphate: Ser393, His421, and Thr449. Lys452 is an active-site residue. Lys452 carries the N6-(pyridoxal phosphate)lysine modification. The pyridoxal 5'-phosphate site is built by Thr481 and Thr482. Thr569 is a substrate binding site. A Hydroxyproline modification is found at Pro583.

This sequence belongs to the class-II pyridoxal-phosphate-dependent aminotransferase family. In terms of assembly, homodimer. Interacts (hydroxylated form) with VHL. Pyridoxal 5'-phosphate serves as cofactor. Post-translationally, in normoxia, is hydroxylated at Pro-583, promoting interaction with VHL, initiating ubiquitination and subsequent degradation via the proteasome. Ubiquitinated; in normoxia following hydroxylation and interaction with VHL, leading to its subsequent degradation via the proteasome.

It is found in the mitochondrion inner membrane. It carries out the reaction succinyl-CoA + glycine + H(+) = 5-aminolevulinate + CO2 + CoA. It participates in porphyrin-containing compound metabolism; protoporphyrin-IX biosynthesis; 5-aminolevulinate from glycine: step 1/1. In terms of biological role, catalyzes the pyridoxal 5'-phosphate (PLP)-dependent condensation of succinyl-CoA and glycine to form aminolevulinic acid (ALA), with CoA and CO2 as by-products. The polypeptide is 5-aminolevulinate synthase, non-specific, mitochondrial (ALAS1) (Bos taurus (Bovine)).